A 318-amino-acid polypeptide reads, in one-letter code: Elongator complex protein 5 (318 aa).

The residue at position 270 (Ser270) is a Phosphoserine.

This sequence belongs to the ELP5 family. In terms of assembly, component of the elongator complex which consists of ELP1, ELP2, ELP3, ELP4, ELP5 and ELP6; in the complex, is required for optimal binding of ELP3 to ELP4. In terms of processing, tyrosine-phosphorylated.

It is found in the nucleus. Its subcellular location is the cytoplasm. It participates in tRNA modification; 5-methoxycarbonylmethyl-2-thiouridine-tRNA biosynthesis. Component of the elongator complex which is required for multiple tRNA modifications, including mcm5U (5-methoxycarbonylmethyl uridine), mcm5s2U (5-methoxycarbonylmethyl-2-thiouridine), and ncm5U (5-carbamoylmethyl uridine). The elongator complex catalyzes the formation of carboxymethyluridine in the wobble base at position 34 in tRNAs. Involved in cell migration. This Rattus norvegicus (Rat) protein is Elongator complex protein 5 (Elp5).